The chain runs to 247 residues: ATP synthase subunit a, chloroplastic (247 aa).

The next 5 helical transmembrane spans lie at 38 to 58 (QVLITSWVVIAILLASATLAV), 95 to 115 (VPFIGTMFLFIFVSNWSGALL), 134 to 154 (INTTVALALLTSVAYFYAGLS), 199 to 219 (LVVVVLVSLVPSVVPIPVMFL), and 220 to 240 (GLFTSGIQALIFATLAAAYIG).

This sequence belongs to the ATPase A chain family. As to quaternary structure, F-type ATPases have 2 components, CF(1) - the catalytic core - and CF(0) - the membrane proton channel. CF(1) has five subunits: alpha(3), beta(3), gamma(1), delta(1), epsilon(1). CF(0) has four main subunits: a, b, b' and c.

It is found in the plastid. The protein resides in the chloroplast thylakoid membrane. In terms of biological role, key component of the proton channel; it plays a direct role in the translocation of protons across the membrane. In Lactuca sativa (Garden lettuce), this protein is ATP synthase subunit a, chloroplastic.